A 525-amino-acid chain; its full sequence is GMP synthase [glutamine-hydrolyzing] (525 aa).

One can recognise a Glutamine amidotransferase type-1 domain in the interval 12-206 (RILIIDFGSQ…THGICGCGGD (195 aa)). The active-site Nucleophile is cysteine 90. Active-site residues include histidine 180 and glutamate 182. Residues 207–399 (WTMAAFKDQA…LGLPDEMVGR (193 aa)) form the GMPS ATP-PPase domain. Position 234-240 (234-240 (SGGVDSS)) interacts with ATP.

Homodimer.

The catalysed reaction is XMP + L-glutamine + ATP + H2O = GMP + L-glutamate + AMP + diphosphate + 2 H(+). It participates in purine metabolism; GMP biosynthesis; GMP from XMP (L-Gln route): step 1/1. Catalyzes the synthesis of GMP from XMP. The chain is GMP synthase [glutamine-hydrolyzing] from Rhodospirillum rubrum (strain ATCC 11170 / ATH 1.1.1 / DSM 467 / LMG 4362 / NCIMB 8255 / S1).